The primary structure comprises 586 residues: A-type ATP synthase subunit A (586 aa).

Position 233–240 (233–240 (GPFGSGKT)) interacts with ATP.

This sequence belongs to the ATPase alpha/beta chains family. In terms of assembly, has multiple subunits with at least A(3), B(3), C, D, E, F, H, I and proteolipid K(x).

It localises to the cell membrane. The enzyme catalyses ATP + H2O + 4 H(+)(in) = ADP + phosphate + 5 H(+)(out). Functionally, component of the A-type ATP synthase that produces ATP from ADP in the presence of a proton gradient across the membrane. The A chain is the catalytic subunit. The polypeptide is A-type ATP synthase subunit A (Methanococcus aeolicus (strain ATCC BAA-1280 / DSM 17508 / OCM 812 / Nankai-3)).